The sequence spans 296 residues: NAD kinase (296 aa).

D74 acts as the Proton acceptor in catalysis. NAD(+) is bound by residues D74–G75, N148–D149, R176, D178, and T189–S194.

Belongs to the NAD kinase family. The cofactor is a divalent metal cation.

It is found in the cytoplasm. The enzyme catalyses NAD(+) + ATP = ADP + NADP(+) + H(+). Functionally, involved in the regulation of the intracellular balance of NAD and NADP, and is a key enzyme in the biosynthesis of NADP. Catalyzes specifically the phosphorylation on 2'-hydroxyl of the adenosine moiety of NAD to yield NADP. The sequence is that of NAD kinase from Nitrosomonas eutropha (strain DSM 101675 / C91 / Nm57).